The chain runs to 190 residues: Guanylate kinase (190 aa).

Residues 8-188 (GRLVILAGPS…AVSAIKAVLL (181 aa)) enclose the Guanylate kinase-like domain. ATP is bound at residue 15–22 (GPSAVGKS).

This sequence belongs to the guanylate kinase family.

Its subcellular location is the cytoplasm. It carries out the reaction GMP + ATP = GDP + ADP. In terms of biological role, essential for recycling GMP and indirectly, cGMP. This chain is Guanylate kinase, found in Corynebacterium efficiens (strain DSM 44549 / YS-314 / AJ 12310 / JCM 11189 / NBRC 100395).